The chain runs to 192 residues: Phosphomevalonate kinase (192 aa).

ATP is bound by residues 17–23 (KRKSGKD) and Arg-141. Residue Asn-170 coordinates substrate. The ATP site is built by His-171, Arg-176, and Gln-180.

As to quaternary structure, monomer. Heart, liver, skeletal muscle, kidney, and pancreas. Lower level in brain, placenta and lung.

Its subcellular location is the cytoplasm. The protein resides in the cytosol. The enzyme catalyses (R)-5-phosphomevalonate + ATP = (R)-5-diphosphomevalonate + ADP. Its pathway is isoprenoid biosynthesis; isopentenyl diphosphate biosynthesis via mevalonate pathway; isopentenyl diphosphate from (R)-mevalonate: step 2/3. Functionally, catalyzes the reversible ATP-dependent phosphorylation of mevalonate 5-phosphate to produce mevalonate diphosphate and ADP, a key step in the mevalonic acid mediated biosynthesis of isopentenyl diphosphate and other polyisoprenoid metabolites. The polypeptide is Phosphomevalonate kinase (PMVK) (Homo sapiens (Human)).